The following is a 408-amino-acid chain: ATP phosphoribosyltransferase regulatory subunit (408 aa).

Belongs to the class-II aminoacyl-tRNA synthetase family. HisZ subfamily. As to quaternary structure, heteromultimer composed of HisG and HisZ subunits.

The protein localises to the cytoplasm. Its pathway is amino-acid biosynthesis; L-histidine biosynthesis; L-histidine from 5-phospho-alpha-D-ribose 1-diphosphate: step 1/9. In terms of biological role, required for the first step of histidine biosynthesis. May allow the feedback regulation of ATP phosphoribosyltransferase activity by histidine. The protein is ATP phosphoribosyltransferase regulatory subunit of Thermosynechococcus vestitus (strain NIES-2133 / IAM M-273 / BP-1).